Here is a 505-residue protein sequence, read N- to C-terminus: Adenylosuccinate synthetase, chloroplastic (505 aa).

The N-terminal 60 residues, 1–60 (MTTMNISTLRLDSNPITTSTKSTTHRSGALGYNGSYSCRLLQFQKKNKAPSIIVCSTKPL), are a transit peptide targeting the chloroplast. GTP contacts are provided by residues 92-98 (GDEGKGK) and 120-122 (GHT). Aspartate 93 acts as the Proton acceptor in catalysis. Mg(2+) contacts are provided by aspartate 93 and glycine 120. Residues 93–96 (DEGK), 118–121 (NAGH), threonine 210, arginine 224, glutamine 304, threonine 319, and arginine 383 contribute to the IMP site. Histidine 121 serves as the catalytic Proton donor. Residue 379–385 (TTTGRPR) participates in substrate binding. Residues arginine 385, 411–413 (KLD), and 494–496 (GVG) each bind GTP.

Belongs to the adenylosuccinate synthetase family. In terms of assembly, homodimer. Mg(2+) serves as cofactor.

Its subcellular location is the plastid. It is found in the chloroplast. The catalysed reaction is IMP + L-aspartate + GTP = N(6)-(1,2-dicarboxyethyl)-AMP + GDP + phosphate + 2 H(+). The protein operates within purine metabolism; AMP biosynthesis via de novo pathway; AMP from IMP: step 1/2. Functionally, plays an important role in the de novo pathway and in the salvage pathway of purine nucleotide biosynthesis. Catalyzes the first committed step in the biosynthesis of AMP from IMP. The chain is Adenylosuccinate synthetase, chloroplastic from Nicotiana tabacum (Common tobacco).